The chain runs to 394 residues: Stabilizer of axonemal microtubules 2 (394 aa).

Mn regions lie at residues 110–122 (STTFQDDYVPQEI), 144–158 (DTSHRRDYVPHQLEV), 244–256 (NSTSHLDYVPYQA), 278–292 (KSTTKEDFPAWEICR), 312–324 (LSTFRSHFVPHEL), and 346–360 (VTMYSIQFTPKKQEI).

The protein belongs to the FAM154 family.

The sequence is that of Stabilizer of axonemal microtubules 2 (Saxo2) from Mus musculus (Mouse).